The following is a 249-amino-acid chain: Octanoyltransferase (249 aa).

A BPL/LPL catalytic domain is found at 53–234 (PDTDDEIWVV…RLIAHLDGAT (182 aa)). Residues 93–100 (RGGQITYH), 165–167 (ALG), and 178–180 (GLS) each bind substrate. The active-site Acyl-thioester intermediate is the Cys-196.

Belongs to the LipB family.

It is found in the cytoplasm. The catalysed reaction is octanoyl-[ACP] + L-lysyl-[protein] = N(6)-octanoyl-L-lysyl-[protein] + holo-[ACP] + H(+). It functions in the pathway protein modification; protein lipoylation via endogenous pathway; protein N(6)-(lipoyl)lysine from octanoyl-[acyl-carrier-protein]: step 1/2. Catalyzes the transfer of endogenously produced octanoic acid from octanoyl-acyl-carrier-protein onto the lipoyl domains of lipoate-dependent enzymes. Lipoyl-ACP can also act as a substrate although octanoyl-ACP is likely to be the physiological substrate. The protein is Octanoyltransferase of Burkholderia mallei (strain NCTC 10247).